The primary structure comprises 311 residues: 4-hydroxy-tetrahydrodipicolinate synthase (311 aa).

Thr49 provides a ligand contact to pyruvate. Residue Tyr138 is the Proton donor/acceptor of the active site. The active-site Schiff-base intermediate with substrate is Lys166. A pyruvate-binding site is contributed by Ile207.

The protein belongs to the DapA family. Homotetramer; dimer of dimers.

Its subcellular location is the cytoplasm. The enzyme catalyses L-aspartate 4-semialdehyde + pyruvate = (2S,4S)-4-hydroxy-2,3,4,5-tetrahydrodipicolinate + H2O + H(+). It participates in amino-acid biosynthesis; L-lysine biosynthesis via DAP pathway; (S)-tetrahydrodipicolinate from L-aspartate: step 3/4. In terms of biological role, catalyzes the condensation of (S)-aspartate-beta-semialdehyde [(S)-ASA] and pyruvate to 4-hydroxy-tetrahydrodipicolinate (HTPA). This chain is 4-hydroxy-tetrahydrodipicolinate synthase, found in Limosilactobacillus fermentum (strain NBRC 3956 / LMG 18251) (Lactobacillus fermentum).